We begin with the raw amino-acid sequence, 474 residues long: Cysteine--tRNA ligase (474 aa).

Cys-29 is a Zn(2+) binding site. A 'HIGH' region motif is present at residues 31-41 (ATVQGEPHVGH). 3 residues coordinate Zn(2+): Cys-211, His-236, and Glu-240. Positions 267–271 (KMSKS) match the 'KMSKS' region motif. Lys-270 is an ATP binding site.

Belongs to the class-I aminoacyl-tRNA synthetase family. Monomer. Zn(2+) is required as a cofactor.

It localises to the cytoplasm. It carries out the reaction tRNA(Cys) + L-cysteine + ATP = L-cysteinyl-tRNA(Cys) + AMP + diphosphate. This Beutenbergia cavernae (strain ATCC BAA-8 / DSM 12333 / CCUG 43141 / JCM 11478 / NBRC 16432 / NCIMB 13614 / HKI 0122) protein is Cysteine--tRNA ligase.